A 419-amino-acid chain; its full sequence is Putative polyketide beta-ketoacyl synthase 2 (419 aa).

The region spanning 10-413 (TRRTAVTGIG…GSNAALVLRP (404 aa)) is the Ketosynthase family 3 (KS3) domain.

This sequence belongs to the thiolase-like superfamily. Beta-ketoacyl-ACP synthases family.

Its pathway is antibiotic biosynthesis; curamycin biosynthesis. In Streptomyces cyaneus (Streptomyces curacoi), this protein is Putative polyketide beta-ketoacyl synthase 2 (curB).